An 80-amino-acid chain; its full sequence is MPHRYPAAKINKMPKGSVPALQQEMLRRVSKRYDDVEVIIKSTSNDGLSVTRTADKDSAKTFVQETLKDTWESADEWFVR.

The chain is DinI-like protein Z2083/ECs2153 from Escherichia coli O157:H7.